Here is a 75-residue protein sequence, read N- to C-terminus: Cruzioseptin-6 (75 aa).

The first 22 residues, 1–22, serve as a signal peptide directing secretion; sequence MAYLKKSLFLVLFLGLVSLSIC. Residues 23-43 constitute a propeptide that is removed on maturation; that stretch reads EEEKREEENEEEQEDDDQSEE. The interval 24–44 is disordered; it reads EEKREEENEEEQEDDDQSEEK. The segment covering 30–41 has biased composition (acidic residues); sequence ENEEEQEDDDQS.

In terms of tissue distribution, expressed by the skin glands.

Its subcellular location is the secreted. Has antimicrobial activity. In Cruziohyla calcarifer (Splendid leaf frog), this protein is Cruzioseptin-6.